A 133-amino-acid polypeptide reads, in one-letter code: Ubiquitin-like FUBI-ribosomal protein eS30 fusion protein (133 aa).

The region spanning 1–74 (MQLFVRAQEL…LEVAGRMLGG (74 aa)) is the Ubiquitin-like domain. A disordered region spans residues 84-110 (GKVRGQTPKVAKQEKKKKKTGRAKRRM). The span at 97–110 (EKKKKKTGRAKRRM) shows a compositional bias: basic residues. N6-succinyllysine is present on Lys125.

It in the N-terminal section; belongs to the ubiquitin family. In the C-terminal section; belongs to the eukaryotic ribosomal protein eS30 family. In terms of assembly, component of the 40S subunit of the ribosome. Post-translationally, FUBI is cleaved from ribosomal protein S30 by the deubiquitinase USP36 before the assembly of ribosomal protein S30 into pre-40S ribosomal particles. FUBI removal from ribosomal protein S30 is a crucial event for the final maturation of pre-40S particles.

The protein localises to the cytoplasm. The protein resides in the nucleus. Functionally, may have pro-apoptotic activity. Component of the 40S subunit of the ribosome. Contributes to the assembly and function of 40S ribosomal subunits. The polypeptide is Ubiquitin-like FUBI-ribosomal protein eS30 fusion protein (Homo sapiens (Human)).